Reading from the N-terminus, the 335-residue chain is Acetyl-coenzyme A carboxylase carboxyl transferase subunit alpha (335 aa).

In terms of domain architecture, CoA carboxyltransferase C-terminal spans 48–308 (VLESKVDALR…KSLLVEELRM (261 aa)).

Belongs to the AccA family. As to quaternary structure, acetyl-CoA carboxylase is a heterohexamer composed of biotin carboxyl carrier protein (AccB), biotin carboxylase (AccC) and two subunits each of ACCase subunit alpha (AccA) and ACCase subunit beta (AccD).

It is found in the cytoplasm. The enzyme catalyses N(6)-carboxybiotinyl-L-lysyl-[protein] + acetyl-CoA = N(6)-biotinyl-L-lysyl-[protein] + malonyl-CoA. It participates in lipid metabolism; malonyl-CoA biosynthesis; malonyl-CoA from acetyl-CoA: step 1/1. Its function is as follows. Component of the acetyl coenzyme A carboxylase (ACC) complex. First, biotin carboxylase catalyzes the carboxylation of biotin on its carrier protein (BCCP) and then the CO(2) group is transferred by the carboxyltransferase to acetyl-CoA to form malonyl-CoA. The polypeptide is Acetyl-coenzyme A carboxylase carboxyl transferase subunit alpha (Chlorobium phaeobacteroides (strain BS1)).